We begin with the raw amino-acid sequence, 328 residues long: Homeobox protein DLX-2 (328 aa).

Polar residues-rich tracts occupy residues 16 to 28 (QIAA…QHQQ) and 52 to 72 (ESPT…NQQH). 3 disordered regions span residues 16–81 (QIAA…GGGG), 211–270 (WKSG…SSPS), and 300–328 (LHPT…GTIF). Residues 152–211 (VRKPRTIYSSFQLAALQRRFQKTQYLALPERAELAASLGLTQTQVKIWFQNRRSKFKKMW) constitute a DNA-binding region (homeobox). A Phosphoserine modification is found at Ser-232. Residues 250–264 (AGGGGPGSGGSGAGS) show a composition bias toward gly residues.

This sequence belongs to the distal-less homeobox family. As to quaternary structure, interacts (via homeobox DNA-binding domain) with POU4F2; this interaction enhances retinal ganglion cell (RGC) differentiation.

Its subcellular location is the nucleus. Functionally, acts as a transcriptional activator. Activates transcription of CGA/alpha-GSU, via binding to the downstream activin regulatory element (DARE) in the gene promoter. Plays a role in terminal differentiation of interneurons, such as amacrine and bipolar cells in the developing retina. Likely to play a regulatory role in the development of the ventral forebrain. May play a role in craniofacial patterning and morphogenesis. In Homo sapiens (Human), this protein is Homeobox protein DLX-2 (DLX2).